A 287-amino-acid polypeptide reads, in one-letter code: Glutamate racemase (287 aa).

A compositionally biased stretch (polar residues) spans 1–15 (MATKPQDANTTSREA). The tract at residues 1 to 25 (MATKPQDANTTSREAITSKADSPPR) is disordered. Residues 32-33 (DS) and 64-65 (YG) each bind substrate. Cys-96 functions as the Proton donor/acceptor in the catalytic mechanism. Position 97–98 (97–98 (NT)) interacts with substrate. The active-site Proton donor/acceptor is the Cys-208. A substrate-binding site is contributed by 209 to 210 (TH).

This sequence belongs to the aspartate/glutamate racemases family.

The catalysed reaction is L-glutamate = D-glutamate. Its pathway is cell wall biogenesis; peptidoglycan biosynthesis. In terms of biological role, provides the (R)-glutamate required for cell wall biosynthesis. The polypeptide is Glutamate racemase (Yersinia pseudotuberculosis serotype I (strain IP32953)).